We begin with the raw amino-acid sequence, 357 residues long: Protein-glutamate methylesterase/protein-glutamine glutaminase 1 (357 aa).

A Response regulatory domain is found at 7 to 124 (KVLCVDDSAL…REGLLDYTQT (118 aa)). Asp-58 carries the 4-aspartylphosphate modification. One can recognise a CheB-type methylesterase domain in the interval 158–350 (LLSTEKLIIV…QRVMAHLATF (193 aa)). Active-site residues include Ser-170, His-196, and Asp-292.

Belongs to the CheB family. Phosphorylated by CheA. Phosphorylation of the N-terminal regulatory domain activates the methylesterase activity.

The protein resides in the cytoplasm. It catalyses the reaction [protein]-L-glutamate 5-O-methyl ester + H2O = L-glutamyl-[protein] + methanol + H(+). The catalysed reaction is L-glutaminyl-[protein] + H2O = L-glutamyl-[protein] + NH4(+). Its function is as follows. Involved in chemotaxis. Part of a chemotaxis signal transduction system that modulates chemotaxis in response to various stimuli. Catalyzes the demethylation of specific methylglutamate residues introduced into the chemoreceptors (methyl-accepting chemotaxis proteins or MCP) by CheR. Also mediates the irreversible deamidation of specific glutamine residues to glutamic acid. This is Protein-glutamate methylesterase/protein-glutamine glutaminase 1 from Cupriavidus metallidurans (strain ATCC 43123 / DSM 2839 / NBRC 102507 / CH34) (Ralstonia metallidurans).